An 861-amino-acid polypeptide reads, in one-letter code: Protein argonaute-4 (861 aa).

A PAZ domain is found at 219–338; it reads PIIEFMCEVL…LPLEVCNIVA (120 aa). Positions 509–820 constitute a Piwi domain; sequence LIVVILPGKT…VAFRARYHLV (312 aa). Positions 825–846 are disordered; sequence DSAEGSHVSGQSNGRDPQALAK.

The protein belongs to the argonaute family. Ago subfamily. Interacts with EIF4B, IMP8, PRMT5, TNRC6A and TNRC6B. Interacts with ZFP36. Ubiquitinated on surface-exposed lysines by a SCF-like E3 ubiquitin-protein ligase complex containing ZSWIM8 during target-directed microRNA degradation (TDMD), a process that mediates degradation of microRNAs (miRNAs). Ubiquitination by the SCF-like E3 ubiquitin-protein ligase complex containing ZSWIM8 leads to its subsequent degradation, thereby exposing miRNAs for degradation. ZSWIM8 recognizes and binds AGO4 when it is engaged with a TDMD target.

It localises to the cytoplasm. Its subcellular location is the P-body. In terms of biological role, required for RNA-mediated gene silencing (RNAi). Binds to short RNAs such as microRNAs (miRNAs) and represses the translation of mRNAs which are complementary to them. Lacks endonuclease activity and does not appear to cleave target mRNAs. Also required for RNA-directed transcription and replication of the human hapatitis delta virus (HDV). The sequence is that of Protein argonaute-4 (AGO4) from Homo sapiens (Human).